The chain runs to 119 residues: MDILCSTLLLLTVPSWVLSQVTLRESGPALVKPTQTLTLTCTFSGFSLSTSGMCVSWIRQPPGKALEWLALIDWDDDKYYSTSLKTRLTISKDTSKNQVVLTMTNMDPVDTATYYCARI.

Residues 1–19 (MDILCSTLLLLTVPSWVLS) form the signal peptide. Pyrrolidone carboxylic acid is present on glutamine 20. The segment at 20–44 (QVTLRESGPALVKPTQTLTLTCTFS) is framework-1. Residues 20 to 119 (QVTLRESGPA…DTATYYCARI (100 aa)) enclose the Ig-like domain. An intrachain disulfide couples cysteine 41 to cysteine 116. A complementarity-determining-1 region spans residues 45–54 (GFSLSTSGMC). The tract at residues 55-71 (VSWIRQPPGKALEWLAL) is framework-2. Positions 72-78 (IDWDDDK) are complementarity-determining-2. Residues 79 to 116 (YYSTSLKTRLTISKDTSKNQVVLTMTNMDPVDTATYYC) form a framework-3 region. The tract at residues 117-119 (ARI) is complementarity-determining-3.

Immunoglobulins are composed of two identical heavy chains and two identical light chains; disulfide-linked.

It localises to the secreted. The protein resides in the cell membrane. In terms of biological role, v region of the variable domain of immunoglobulin heavy chains that participates in the antigen recognition. Immunoglobulins, also known as antibodies, are membrane-bound or secreted glycoproteins produced by B lymphocytes. In the recognition phase of humoral immunity, the membrane-bound immunoglobulins serve as receptors which, upon binding of a specific antigen, trigger the clonal expansion and differentiation of B lymphocytes into immunoglobulins-secreting plasma cells. Secreted immunoglobulins mediate the effector phase of humoral immunity, which results in the elimination of bound antigens. The antigen binding site is formed by the variable domain of one heavy chain, together with that of its associated light chain. Thus, each immunoglobulin has two antigen binding sites with remarkable affinity for a particular antigen. The variable domains are assembled by a process called V-(D)-J rearrangement and can then be subjected to somatic hypermutations which, after exposure to antigen and selection, allow affinity maturation for a particular antigen. The chain is Immunoglobulin heavy variable 2-70 from Homo sapiens (Human).